We begin with the raw amino-acid sequence, 296 residues long: MAMVQPKSQKARLFITHLLLLLFIAAIMFPLLMVVAISLRQGNFATGSLIPEQISWDHWKLALGFSVEQADGRITPPPFPVLLWLWNSVKVAGISAIGIVALSTTCAYAFARMRFPGKATLLKGMLIFQMFPAVLSLVALYALFDRLGEYIPFIGLNTHGGVIFAYLGGIALHVWTIKGYFETIDSSLEEAAALDGATPWQAFRLVLLPLSVPILAVVFILSFIAAITEVPVASLLLRDVNSYTLAVGMQQYLNPQNYLWGDFAAAAVMSALPITIVFLLAQRWLVNGLTAGGVKG.

The Cytoplasmic segment spans residues methionine 1–arginine 12. The helical transmembrane segment at leucine 13–valine 35 threads the bilayer. Topologically, residues alanine 36–serine 88 are periplasmic. The ABC transmembrane type-1 domain occupies leucine 85–alanine 281. A helical transmembrane segment spans residues valine 89–alanine 111. The Cytoplasmic segment spans residues arginine 112 to lysine 123. The chain crosses the membrane as a helical span at residues glycine 124 to leucine 143. Residues phenylalanine 144–proline 152 lie on the Periplasmic side of the membrane. The helical transmembrane segment at phenylalanine 153–tryptophan 175 threads the bilayer. Over threonine 176–arginine 204 the chain is Cytoplasmic. Residues leucine 205–isoleucine 227 form a helical membrane-spanning segment. At threonine 228–asparagine 257 the chain is on the periplasmic side. A helical transmembrane segment spans residues tyrosine 258–leucine 280. Residues alanine 281–glycine 296 lie on the Cytoplasmic side of the membrane.

It belongs to the binding-protein-dependent transport system permease family. MalFG subfamily. As to quaternary structure, the complex is composed of two ATP-binding proteins (MalK), two transmembrane proteins (MalG and MalF) and a solute-binding protein (MalE).

The protein resides in the cell inner membrane. Its function is as follows. Part of the ABC transporter complex MalEFGK involved in maltose/maltodextrin import. Probably responsible for the translocation of the substrate across the membrane. The protein is Maltose/maltodextrin transport system permease protein MalG (malG) of Escherichia coli O157:H7.